The primary structure comprises 150 residues: MRNLKKTRRIQILLVAGGALVLSTALIGYGMRDGINFFRAPSQIVAEPPAAGEVFRLGGLVEAGTLVRGQGEEITFKVTDGGASVPVTFTGVLPDLFGEGKGMVGTGEMVEGTFVAREILAKHDENYMPKEVTEALKEQGVYRDPAQPEG.

The Cytoplasmic segment spans residues 1-9; sequence MRNLKKTRR. The helical; Signal-anchor for type II membrane protein transmembrane segment at 10–30 threads the bilayer; it reads IQILLVAGGALVLSTALIGYG. The Periplasmic segment spans residues 31 to 150; sequence MRDGINFFRA…VYRDPAQPEG (120 aa). Heme contacts are provided by His123 and Tyr127.

It belongs to the CcmE/CycJ family.

It localises to the cell inner membrane. Its function is as follows. Heme chaperone required for the biogenesis of c-type cytochromes. Transiently binds heme delivered by CcmC and transfers the heme to apo-cytochromes in a process facilitated by CcmF and CcmH. In Rhodobacter capsulatus (strain ATCC BAA-309 / NBRC 16581 / SB1003), this protein is Cytochrome c-type biogenesis protein CcmE.